A 196-amino-acid polypeptide reads, in one-letter code: MVKSAYSYIRDAWKNPSKTYVGELFWERLQEWRKEPTVVKIDRPTRLDRARALGYKAKQGIIVARAHVRRGGRRKSRYSRGRKSKHMGLRTLTRRTSIQRMAEVRASRKFPNMEVLNSYWVGQDGKHKWYEIILVDPHHPSIASDKNLSWITKGTHRGRAERGLTSAGKKGRGQRRKGKGTEKNYPSVQAHDRRGK.

Residues 155 to 196 are disordered; the sequence is THRGRAERGLTSAGKKGRGQRRKGKGTEKNYPSVQAHDRRGK. Positions 169–178 are enriched in basic residues; the sequence is KKGRGQRRKG.

It belongs to the eukaryotic ribosomal protein eL15 family.

This chain is Large ribosomal subunit protein eL15, found in Methanocella arvoryzae (strain DSM 22066 / NBRC 105507 / MRE50).